Reading from the N-terminus, the 339-residue chain is Ferrochelatase (339 aa).

Fe cation-binding residues include histidine 209 and glutamate 290.

It belongs to the ferrochelatase family.

It is found in the cytoplasm. The enzyme catalyses heme b + 2 H(+) = protoporphyrin IX + Fe(2+). It participates in porphyrin-containing compound metabolism; protoheme biosynthesis; protoheme from protoporphyrin-IX: step 1/1. In terms of biological role, catalyzes the ferrous insertion into protoporphyrin IX. In Rhizobium meliloti (strain 1021) (Ensifer meliloti), this protein is Ferrochelatase.